The following is a 396-amino-acid chain: Obg-like ATPase 1 (396 aa).

Residues 23-283 form the OBG-type G domain; that stretch reads LKIGIVGLPN…MSAEEKQKYL (261 aa). 32–37 serves as a coordination point for ATP; the sequence is NVGKST. 2 residues coordinate Mg(2+): serine 36 and threonine 56. Leucine 231 provides a ligand contact to ATP. Residues 267–274 carry the Nuclear export signal motif; the sequence is LELKLQDM. A TGS domain is found at 304 to 387; it reads QLEYFFTAGP…EDGDIIFFKF (84 aa).

The protein belongs to the TRAFAC class OBG-HflX-like GTPase superfamily. OBG GTPase family. YchF/OLA1 subfamily. Monomer. Mg(2+) is required as a cofactor.

It localises to the cytoplasm. It is found in the nucleus. Its subcellular location is the nucleolus. Functionally, hydrolyzes ATP, and can also hydrolyze GTP with lower efficiency. Has lower affinity for GTP. This Gallus gallus (Chicken) protein is Obg-like ATPase 1.